Reading from the N-terminus, the 748-residue chain is Tyrosine--tRNA ligase 2, cytoplasmic (748 aa).

N-acetylmethionine is present on Met1. A 'HIGH' region motif is present at residues 441-449 (PSGRMHIAQ). Tyr564, Gln568, Asp571, and Gln586 together coordinate L-tyrosine. Residues 623-627 (KMSKS) carry the 'KMSKS' region motif. Residue Lys626 coordinates ATP.

The protein belongs to the class-I aminoacyl-tRNA synthetase family.

The protein resides in the cytoplasm. Its subcellular location is the cytosol. The enzyme catalyses tRNA(Tyr) + L-tyrosine + ATP = L-tyrosyl-tRNA(Tyr) + AMP + diphosphate + H(+). Catalyzes the attachment of tyrosine to tRNA(Tyr) in a two-step reaction: tyrosine is first activated by ATP to form Tyr-AMP and then transferred to the acceptor end of tRNA(Tyr). This is Tyrosine--tRNA ligase 2, cytoplasmic from Arabidopsis thaliana (Mouse-ear cress).